The following is a 670-amino-acid chain: Transketolase (670 aa).

H31 contacts substrate. Thiamine diphosphate is bound by residues H71 and 120–122 (GPL). Residue D161 participates in Mg(2+) binding. Thiamine diphosphate is bound by residues G162 and N191. The Mg(2+) site is built by N191 and I193. Substrate is bound by residues H268, R362, and S389. H268 contacts thiamine diphosphate. E416 (proton donor) is an active-site residue. F443 serves as a coordination point for thiamine diphosphate. 3 residues coordinate substrate: H467, D475, and R528.

Homodimer. Requires Mg(2+) as cofactor. It depends on Ca(2+) as a cofactor. The cofactor is Mn(2+). Co(2+) is required as a cofactor. Thiamine diphosphate serves as cofactor.

The enzyme catalyses D-sedoheptulose 7-phosphate + D-glyceraldehyde 3-phosphate = aldehydo-D-ribose 5-phosphate + D-xylulose 5-phosphate. Its function is as follows. Catalyzes the transfer of a two-carbon ketol group from a ketose donor to an aldose acceptor, via a covalent intermediate with the cofactor thiamine pyrophosphate. The chain is Transketolase (tkt) from Nostoc sp. (strain PCC 7120 / SAG 25.82 / UTEX 2576).